The primary structure comprises 243 residues: Phosphate-specific transport system accessory protein PhoU (243 aa).

It belongs to the PhoU family. As to quaternary structure, homodimer. Interacts with phosphate regulon transcriptional regulatory protein PhoB and ferric uptake regulation protein Fur.

The protein localises to the cytoplasm. Functionally, part of the phosphate (Pho) regulon, which plays a key role in phosphate homeostasis. Encoded together with proteins of the phosphate-specific transport (Pst) system in the polycistronic pstSCAB-phoU operon. PhoU is essential for the repression of the Pho regulon at high phosphate conditions. In this role, it may bind, possibly as a chaperone, to PhoR, PhoB or a PhoR-PhoB complex to promote dephosphorylation of phospho-PhoB, or inhibit formation of the PhoR-PhoB transitory complex. The polypeptide is Phosphate-specific transport system accessory protein PhoU (Edwardsiella tarda).